Here is a 370-residue protein sequence, read N- to C-terminus: Glutamine synthetase (370 aa).

Position 2 is an N-acetylalanine (alanine 2). Phosphoserine is present on serine 5. The GS beta-grasp domain occupies 24–103; it reads IIAEYVWIDG…VLAACYNNDG (80 aa). In terms of domain architecture, GS catalytic spans 110–370; that stretch reads HRHEAAKLFA…MTKEFERESS (261 aa). Residues lysine 283, lysine 324, and lysine 363 each participate in a glycyl lysine isopeptide (Lys-Gly) (interchain with G-Cter in ubiquitin) cross-link.

Belongs to the glutamine synthetase family. Homooctamer.

The protein resides in the cytoplasm. It carries out the reaction L-glutamate + NH4(+) + ATP = L-glutamine + ADP + phosphate + H(+). The sequence is that of Glutamine synthetase (GLN1) from Saccharomyces cerevisiae (strain ATCC 204508 / S288c) (Baker's yeast).